The chain runs to 113 residues: Pancreatic progenitor cell differentiation and proliferation factor A (113 aa).

It belongs to the PPDPF family.

Probable regulator of exocrine pancreas development. In Xenopus laevis (African clawed frog), this protein is Pancreatic progenitor cell differentiation and proliferation factor A (ppdpf-a).